The chain runs to 106 residues: UPF0145 protein Nmul_A0734 (106 aa).

It belongs to the UPF0145 family.

This chain is UPF0145 protein Nmul_A0734, found in Nitrosospira multiformis (strain ATCC 25196 / NCIMB 11849 / C 71).